Here is a 483-residue protein sequence, read N- to C-terminus: Chromatin structure-remodeling complex protein RSC6 (483 aa).

Disordered regions lie at residues 142–183 (KRKR…EAES) and 273–309 (AQDG…DKPE). Residues 148-158 (SLSLPLNLQQP) show a composition bias toward low complexity. The span at 171–180 (DNGEDEDSAE) shows a compositional bias: acidic residues.

This sequence to yeast SNF12. In terms of assembly, interacts directly with RSC8. Component of the two forms of the RSC complex composed of at least either RSC1 or RSC2, and ARP7, ARP9, LDB7, NPL6, RSC3, RSC30, RSC4, RSC58, RSC6, RSC8, RSC9, SFH1, STH1, HTL1 and probably RTT102. The complexes interact with histone and histone variant components of centromeric chromatin.

It is found in the nucleus. In terms of biological role, component of the chromatin structure-remodeling complex (RSC), which is involved in transcription regulation and nucleosome positioning. RSC is responsible for the transfer of a histone octamer from a nucleosome core particle to naked DNA. The reaction requires ATP and involves an activated RSC-nucleosome intermediate. Remodeling reaction also involves DNA translocation, DNA twist and conformational change. As a reconfigurer of centromeric and flanking nucleosomes, RSC complex is required both for proper kinetochore function in chromosome segregation and, via a PKC1-dependent signaling pathway, for organization of the cellular cytoskeleton. This subunit is essential for mitotic growth and suppresses formamide sensitivity of the RSC8 mutants. The chain is Chromatin structure-remodeling complex protein RSC6 (RSC6) from Saccharomyces cerevisiae (strain ATCC 204508 / S288c) (Baker's yeast).